The sequence spans 591 residues: L-fucose isomerase (591 aa).

Active-site proton acceptor residues include glutamate 337 and aspartate 361. The Mn(2+) site is built by glutamate 337, aspartate 361, and histidine 528.

Belongs to the L-fucose isomerase family. As to quaternary structure, homohexamer. The cofactor is Mn(2+).

The protein localises to the cytoplasm. It catalyses the reaction L-fucose = L-fuculose. The protein operates within carbohydrate degradation; L-fucose degradation; L-lactaldehyde and glycerone phosphate from L-fucose: step 1/3. Functionally, converts the aldose L-fucose into the corresponding ketose L-fuculose. The protein is L-fucose isomerase of Salmonella paratyphi A (strain ATCC 9150 / SARB42).